Here is a 92-residue protein sequence, read N- to C-terminus: Defensin alpha 4 (92 aa).

A signal peptide spans Met-1–Ala-19. The propeptide occupies Asp-20–Ser-58. Residues Gln-23 to Val-42 are disordered. 3 disulfides stabilise this stretch: Cys-64–Cys-89, Cys-66–Cys-81, and Cys-71–Cys-88.

This sequence belongs to the alpha-defensin family. Paneth cells of the small bowel.

The protein resides in the secreted. It localises to the cytoplasmic vesicle. Its subcellular location is the secretory vesicle. In terms of biological role, host-defense peptide that has antimicrobial activity. Exhibits activity against Gram-negative E.coli (in vitro). Probably contributes to the antimicrobial barrier function of the small bowel mucosa. In Mus musculus (Mouse), this protein is Defensin alpha 4.